The following is a 345-amino-acid chain: Holliday junction branch migration complex subunit RuvB (345 aa).

The segment at 1 to 182 (MDQRIIASSS…FGIVQRLEFY (182 aa)) is large ATPase domain (RuvB-L). ATP contacts are provided by residues Ile21, Arg22, Gly63, Lys66, Thr67, Thr68, 129 to 131 (EDF), Arg172, Tyr182, and Arg219. Thr67 contacts Mg(2+). The interval 183 to 253 (SPQELTRIVI…VAQAAMQMLK (71 aa)) is small ATPAse domain (RuvB-S). The interval 256–345 (PEGFDELDRR…PGIGEPGDLF (90 aa)) is head domain (RuvB-H). Residues Arg292, Arg311, and Arg316 each coordinate DNA.

It belongs to the RuvB family. In terms of assembly, homohexamer. Forms an RuvA(8)-RuvB(12)-Holliday junction (HJ) complex. HJ DNA is sandwiched between 2 RuvA tetramers; dsDNA enters through RuvA and exits via RuvB. An RuvB hexamer assembles on each DNA strand where it exits the tetramer. Each RuvB hexamer is contacted by two RuvA subunits (via domain III) on 2 adjacent RuvB subunits; this complex drives branch migration. In the full resolvosome a probable DNA-RuvA(4)-RuvB(12)-RuvC(2) complex forms which resolves the HJ.

Its subcellular location is the cytoplasm. It carries out the reaction ATP + H2O = ADP + phosphate + H(+). In terms of biological role, the RuvA-RuvB-RuvC complex processes Holliday junction (HJ) DNA during genetic recombination and DNA repair, while the RuvA-RuvB complex plays an important role in the rescue of blocked DNA replication forks via replication fork reversal (RFR). RuvA specifically binds to HJ cruciform DNA, conferring on it an open structure. The RuvB hexamer acts as an ATP-dependent pump, pulling dsDNA into and through the RuvAB complex. RuvB forms 2 homohexamers on either side of HJ DNA bound by 1 or 2 RuvA tetramers; 4 subunits per hexamer contact DNA at a time. Coordinated motions by a converter formed by DNA-disengaged RuvB subunits stimulates ATP hydrolysis and nucleotide exchange. Immobilization of the converter enables RuvB to convert the ATP-contained energy into a lever motion, pulling 2 nucleotides of DNA out of the RuvA tetramer per ATP hydrolyzed, thus driving DNA branch migration. The RuvB motors rotate together with the DNA substrate, which together with the progressing nucleotide cycle form the mechanistic basis for DNA recombination by continuous HJ branch migration. Branch migration allows RuvC to scan DNA until it finds its consensus sequence, where it cleaves and resolves cruciform DNA. The protein is Holliday junction branch migration complex subunit RuvB of Xanthomonas oryzae pv. oryzae (strain MAFF 311018).